The following is a 698-amino-acid chain: Putative transposon gamma-delta 80.3 kDa protein (698 aa).

In Escherichia coli (strain K12), this protein is Putative transposon gamma-delta 80.3 kDa protein (tnpX).